A 95-amino-acid polypeptide reads, in one-letter code: Aspartyl/glutamyl-tRNA(Asn/Gln) amidotransferase subunit C (95 aa).

Belongs to the GatC family. As to quaternary structure, heterotrimer of A, B and C subunits.

It carries out the reaction L-glutamyl-tRNA(Gln) + L-glutamine + ATP + H2O = L-glutaminyl-tRNA(Gln) + L-glutamate + ADP + phosphate + H(+). The enzyme catalyses L-aspartyl-tRNA(Asn) + L-glutamine + ATP + H2O = L-asparaginyl-tRNA(Asn) + L-glutamate + ADP + phosphate + 2 H(+). Functionally, allows the formation of correctly charged Asn-tRNA(Asn) or Gln-tRNA(Gln) through the transamidation of misacylated Asp-tRNA(Asn) or Glu-tRNA(Gln) in organisms which lack either or both of asparaginyl-tRNA or glutaminyl-tRNA synthetases. The reaction takes place in the presence of glutamine and ATP through an activated phospho-Asp-tRNA(Asn) or phospho-Glu-tRNA(Gln). The protein is Aspartyl/glutamyl-tRNA(Asn/Gln) amidotransferase subunit C of Vesicomyosocius okutanii subsp. Calyptogena okutanii (strain HA).